The following is a 486-amino-acid chain: Glutamyl-tRNA(Gln) amidotransferase subunit A (486 aa).

Residues K75 and S150 each act as charge relay system in the active site. S174 acts as the Acyl-ester intermediate in catalysis.

Belongs to the amidase family. GatA subfamily. As to quaternary structure, heterotrimer of A, B and C subunits.

It catalyses the reaction L-glutamyl-tRNA(Gln) + L-glutamine + ATP + H2O = L-glutaminyl-tRNA(Gln) + L-glutamate + ADP + phosphate + H(+). Its function is as follows. Allows the formation of correctly charged Gln-tRNA(Gln) through the transamidation of misacylated Glu-tRNA(Gln) in organisms which lack glutaminyl-tRNA synthetase. The reaction takes place in the presence of glutamine and ATP through an activated gamma-phospho-Glu-tRNA(Gln). This Trichormus variabilis (strain ATCC 29413 / PCC 7937) (Anabaena variabilis) protein is Glutamyl-tRNA(Gln) amidotransferase subunit A.